Here is a 1155-residue protein sequence, read N- to C-terminus: MHC class II transactivator (1155 aa).

The required for acetyltransferase activity stretch occupies residues 171-210; that stretch reads AYANIAELDQYVFQDTQLEGLSKDLFIEHIGAEEGFGENI. 2 disordered regions span residues 217–237 and 297–357; these read GQKP…KHRK and SLSI…IKLP. The span at 224 to 233 shows a compositional bias: basic and acidic residues; the sequence is RFPEEHAMDS. The NACHT domain maps to 439-749; the sequence is QVVAVLGKAG…CFLGAVWLAQ (311 aa). 445-452 lines the GTP pocket; sequence GKAGQGKS. LRR repeat units lie at residues 1010–1033, 1041–1062, 1070–1091, and 1098–1119; these read SLQH…SKLS, ALET…KLAE, SLLR…SLAQ, and SLRV…QLAS.

In terms of assembly, interacts with ZXDA and ZXDC. Interacts with PML (isoform PML-2). Interacts with TAF7; interaction inhibits CIITA acetyltransferase activity, thereby repressing transcription. Post-translationally, autophosphorylated, affecting interaction with TAF7. In terms of tissue distribution, expressed at very high levels in dendritic cells, at very low levels in spleen and thymus and is not detected in other tissues. As to expression, detected at high levels in spleen and tonsil as well as in a number of B-lymphocyte cell lines, and at very low levels in dendritic cells.

Its subcellular location is the nucleus. It localises to the PML body. It carries out the reaction L-seryl-[protein] + ATP = O-phospho-L-seryl-[protein] + ADP + H(+). The catalysed reaction is L-threonyl-[protein] + ATP = O-phospho-L-threonyl-[protein] + ADP + H(+). Functionally, essential for transcriptional activity of the HLA class II promoter; activation is via the proximal promoter. Does not bind DNA. May act in a coactivator-like fashion through protein-protein interactions by contacting factors binding to the proximal MHC class II promoter, to elements of the transcription machinery, or both. Alternatively it may activate HLA class II transcription by modifying proteins that bind to the MHC class II promoter. Also mediates enhanced MHC class I transcription, the promoter element requirements for CIITA-mediated transcription are distinct from those of constitutive MHC class I transcription, and CIITA can functionally replace TAF1 at these genes. Activates CD74 transcription. Exhibits intrinsic GTP-stimulated acetyltransferase activity. Exhibits serine/threonine protein kinase activity: phosphorylates the TFIID component TAF7, the RAP74 subunit of the general transcription factor TFIIF, histone H2B at 'Ser-37' and other histones. This Mus musculus (Mouse) protein is MHC class II transactivator.